A 261-amino-acid chain; its full sequence is MAVNHVRSKSSNGKRLVQSKLNINNETILKCPKCEMKYSPNSIDDVATHKKYHDLHINGRNWSQTWGIPIHDTTSSTIIATPSSSPFKTGKSVNNKNNERIVMIQENKPAEVKAMLEIMDIVNQELNAPQDENNFWRKPNAEHQGKAIVYIKDKKVVGAITVEVLKQHKCRWMIYETRTLVEHVRPQFTLGISRIWVCRAQRGKGIAEKLLDAARISAIPGQNVDKMKLAWSQPSDSGGKLAKKYNGVKHKSGHILIPCYL.

A CCHH-type zinc finger spans residues 29 to 53 (LKCPKCEMKYSPNSIDDVATHKKYH). One can recognise an N-acetyltransferase domain in the interval 102-261 (VMIQENKPAE…SGHILIPCYL (160 aa)).

Belongs to the acetyltransferase family. ECO subfamily.

The protein localises to the nucleus. Probable acetyltransferase required for the establishment of sister chromatid cohesion and couple the processes of cohesion and DNA replication to ensure that only sister chromatids become paired together. In contrast to the structural cohesins, the deposition and establishment factors are required only during S phase. Acts by acetylating the cohesin complex component SMC3. This Candida glabrata (strain ATCC 2001 / BCRC 20586 / JCM 3761 / NBRC 0622 / NRRL Y-65 / CBS 138) (Yeast) protein is N-acetyltransferase ECO1 (ECO1).